A 216-amino-acid chain; its full sequence is 2',3'-cyclic-nucleotide 3'-phosphodiesterase (216 aa).

Catalysis depends on H39, which acts as the Proton donor/acceptor. A substrate-binding site is contributed by T41. H153 functions as the Proton donor/acceptor in the catalytic mechanism. S155 and Y158 together coordinate substrate.

Belongs to the 2H phosphoesterase superfamily. CPD1 family.

The protein localises to the golgi apparatus. It carries out the reaction a nucleoside 2',3'-cyclic phosphate + H2O = a nucleoside 2'-phosphate + H(+). Functionally, involved in the metabolism of ADP-ribose 1',2'-cyclic phosphate which is produced as a consequence of tRNA splicing. This chain is 2',3'-cyclic-nucleotide 3'-phosphodiesterase (CPD1), found in Yarrowia lipolytica (strain CLIB 122 / E 150) (Yeast).